We begin with the raw amino-acid sequence, 191 residues long: TATA-box-binding protein (191 aa).

Tandem repeats lie at residues 11 to 87 (IENI…AQKL) and 102 to 178 (VQNM…LREL).

Belongs to the TBP family.

Its function is as follows. General factor that plays a role in the activation of archaeal genes transcribed by RNA polymerase. Binds specifically to the TATA box promoter element which lies close to the position of transcription initiation. The sequence is that of TATA-box-binding protein (tbp) from Pyrococcus furiosus (strain ATCC 43587 / DSM 3638 / JCM 8422 / Vc1).